The primary structure comprises 261 residues: 3-hydroxyacyl-CoA dehydrogenase type-2 (261 aa).

Ala-2 carries the N-acetylalanine modification. NAD(+) contacts are provided by Ser-20 and Asp-41. Lys-53 carries the N6-acetyllysine; alternate modification. Position 53 is an N6-succinyllysine; alternate (Lys-53). Val-65 provides a ligand contact to NAD(+). Lys-69 is subject to N6-acetyllysine. Cys-91 contacts NAD(+). 2 positions are modified to N6-acetyllysine: Lys-99 and Lys-105. Lys-107 carries the N6-acetyllysine; alternate modification. Lys-107 is subject to N6-succinyllysine; alternate. Residue Ser-155 participates in substrate binding. NAD(+)-binding residues include Tyr-168, Lys-172, Phe-201, and Thr-203. Tyr-168 serves as the catalytic Proton acceptor. N6-acetyllysine; alternate is present on Lys-212. Lys-212 carries the post-translational modification N6-succinyllysine; alternate.

Belongs to the short-chain dehydrogenases/reductases (SDR) family. In terms of assembly, homotetramer. Component of mitochondrial ribonuclease P, a complex composed of TRMT10C/MRPP1, HSD17B10/MRPP2 and PRORP/MRPP3. Interacts with TRMT10C/MRPP1; forming the MRPP1-MRPP2 subcomplex of the mitochondrial ribonuclease P complex.

The protein resides in the mitochondrion. The protein localises to the mitochondrion matrix. Its subcellular location is the mitochondrion nucleoid. It carries out the reaction a (3S)-3-hydroxyacyl-CoA + NAD(+) = a 3-oxoacyl-CoA + NADH + H(+). It catalyses the reaction (2S,3S)-3-hydroxy-2-methylbutanoyl-CoA + NAD(+) = 2-methyl-3-oxobutanoyl-CoA + NADH + H(+). The catalysed reaction is testosterone + NAD(+) = androst-4-ene-3,17-dione + NADH + H(+). The enzyme catalyses 5alpha-androstane-3alpha,17beta-diol + NAD(+) = 17beta-hydroxy-5alpha-androstan-3-one + NADH + H(+). It carries out the reaction 17beta-estradiol + NAD(+) = estrone + NADH + H(+). It catalyses the reaction cholate + NAD(+) = 3alpha,12alpha-dihydroxy-7-oxo-5beta-cholanate + NADH + H(+). The catalysed reaction is (3S)-3-hydroxybutanoyl-CoA + NAD(+) = acetoacetyl-CoA + NADH + H(+). The enzyme catalyses (3S)-hydroxyoctanoyl-CoA + NAD(+) = 3-oxooctanoyl-CoA + NADH + H(+). It carries out the reaction (3S)-hydroxyhexadecanoyl-CoA + NAD(+) = 3-oxohexadecanoyl-CoA + NADH + H(+). It catalyses the reaction 17beta-hydroxy-5alpha-androstan-3-one + NAD(+) = 5alpha-androstan-3,17-dione + NADH + H(+). The catalysed reaction is 5alpha-pregnan-20beta-ol-3-one + NAD(+) = 5alpha-pregnane-3,20-dione + NADH + H(+). The enzyme catalyses 3alpha-hydroxy-5alpha-pregnan-20-one + NAD(+) = 5alpha-pregnane-3,20-dione + NADH + H(+). It carries out the reaction cortisone + NAD(+) = 17alpha-hydroxypregn-4-en-3,11,20-trione-21-al + NADH + H(+). It catalyses the reaction 11-dehydrocorticosterone + NAD(+) = pregn-4-ene-3,11,20,21-tetraone + NADH + H(+). The catalysed reaction is cortisol + NAD(+) = 11beta,17alpha-dihydroxypregn-4-ene-3,20,21-trione + NADH + H(+). The enzyme catalyses chenodeoxycholate + NAD(+) = 7-oxolithocholate + NADH + H(+). It carries out the reaction ursodeoxycholate + NAD(+) = 7-oxolithocholate + NADH + H(+). It catalyses the reaction 3beta,7beta-dihydroxy-5beta-cholan-24-oate + NAD(+) = 3beta-hydroxy-7-oxo-5beta-cholan-24-oate + NADH + H(+). Its pathway is amino-acid degradation; L-isoleucine degradation. The protein operates within lipid metabolism; fatty acid beta-oxidation. It participates in steroid metabolism. It functions in the pathway lipid metabolism; bile acid biosynthesis. Mitochondrial dehydrogenase involved in pathways of fatty acid, branched-chain amino acid and steroid metabolism. Acts as (S)-3-hydroxyacyl-CoA dehydrogenase in mitochondrial fatty acid beta-oxidation, a major degradation pathway of fatty acids. Catalyzes the third step in the beta-oxidation cycle, namely the reversible conversion of (S)-3-hydroxyacyl-CoA to 3-ketoacyl-CoA. Preferentially accepts straight medium- and short-chain acyl-CoA substrates with highest efficiency for (3S)-hydroxybutanoyl-CoA. Acts as 3-hydroxy-2-methylbutyryl-CoA dehydrogenase in branched-chain amino acid catabolic pathway. Catalyzes the oxidation of 3-hydroxy-2-methylbutanoyl-CoA into 2-methyl-3-oxobutanoyl-CoA, a step in isoleucine degradation pathway. Has hydroxysteroid dehydrogenase activity toward steroid hormones and bile acids. Catalyzes the oxidation of 3alpha-, 17beta-, 20beta- and 21-hydroxysteroids and 7alpha- and 7beta-hydroxy bile acids. Oxidizes allopregnanolone/brexanolone at the 3alpha-hydroxyl group, which is known to be critical for the activation of gamma-aminobutyric acid receptors (GABAARs) chloride channel. Has phospholipase C-like activity toward cardiolipin and its oxidized species. Likely oxidizes the 2'-hydroxyl in the head group of cardiolipin to form a ketone intermediate that undergoes nucleophilic attack by water and fragments into diacylglycerol, dihydroxyacetone and orthophosphate. Has higher affinity for cardiolipin with oxidized fatty acids and may degrade these species during the oxidative stress response to protect cells from apoptosis. By interacting with intracellular amyloid-beta, it may contribute to the neuronal dysfunction associated with Alzheimer disease (AD). Essential for structural and functional integrity of mitochondria. Its function is as follows. In addition to mitochondrial dehydrogenase activity, moonlights as a component of mitochondrial ribonuclease P, a complex that cleaves tRNA molecules in their 5'-ends. Together with TRMT10C/MRPP1, forms a subcomplex of the mitochondrial ribonuclease P, named MRPP1-MRPP2 subcomplex, which displays functions that are independent of the ribonuclease P activity. The MRPP1-MRPP2 subcomplex catalyzes the formation of N(1)-methylguanine and N(1)-methyladenine at position 9 (m1G9 and m1A9, respectively) in tRNAs; HSD17B10/MRPP2 acting as a non-catalytic subunit. The MRPP1-MRPP2 subcomplex also acts as a tRNA maturation platform: following 5'-end cleavage by the mitochondrial ribonuclease P complex, the MRPP1-MRPP2 subcomplex enhances the efficiency of 3'-processing catalyzed by ELAC2, retains the tRNA product after ELAC2 processing and presents the nascent tRNA to the mitochondrial CCA tRNA nucleotidyltransferase TRNT1 enzyme. Associates with mitochondrial DNA complexes at the nucleoids to initiate RNA processing and ribosome assembly. The polypeptide is 3-hydroxyacyl-CoA dehydrogenase type-2 (Hsd17b10) (Mus musculus (Mouse)).